The chain runs to 345 residues: Probable velvet family sexual development regulator LACBIDRAFT_317102 (345 aa).

Polar residues-rich tracts occupy residues 1 to 13 (MFTT…SYRS) and 24 to 38 (EIQN…NPPR). 3 disordered regions span residues 1–43 (MFTT…TRRR), 138–189 (ESWT…SPSS), and 310–345 (RKRR…SDED). The 245-residue stretch at 62-306 (GQTIRAELDE…ARWGVRLNIR (245 aa)) folds into the Velvet domain. Composition is skewed to low complexity over residues 141–158 (TSRS…PTLS) and 167–184 (SSPQ…ASTP). Residues 336 to 345 (SEDDEASDED) are compositionally biased toward acidic residues.

The protein belongs to the velvet family.

The protein localises to the nucleus. In terms of biological role, velvet-domain-containing protein that probably acts as a positive regulator of sexual development. The protein is Probable velvet family sexual development regulator LACBIDRAFT_317102 of Laccaria bicolor (strain S238N-H82 / ATCC MYA-4686) (Bicoloured deceiver).